The sequence spans 186 residues: ADP-ribosylation factor-like protein 8B (186 aa).

Residues 1–19 (MLALISRLLDWFRSLFWKE) constitute an intramembrane region (note=Mediates targeting to membranes). Residues 29–35 (QYSGKTT), 71–75 (DIGGQ), and 130–133 (NKRD) contribute to the GTP site. Lys-141 participates in a covalent cross-link: Glycyl lysine isopeptide (Lys-Gly) (interchain with G-Cter in ubiquitin).

The protein belongs to the small GTPase superfamily. Arf family. As to quaternary structure, interacts with tubulin. Interacts with BORCS5; recruits ARL8B to lysosomes. Interacts with VPS41; the interaction mediates the recruitment of the HOPS complex to lysosomes. Interacts (GTP-bound form) with PLEKHM2 (via RUN domain); the interaction is required to recruit the motor protein kinesin-1 on lysosomes. Interacts (GTP-bound form) with PLEKHM1 (via RUN domain); the interaction is required for PLEKHM1 localization to lysosomes and for ARL8B function in delivery and degradation of endocytic and autophagic cargo in lysosomes. PLEKHM1 and PLEKHM2 compete for interaction with ARL8B. Interacts (GTP-bound form) with RUFY1; the interaction is required for RUFY1 endosomal location. When GTP-bound, interacts with RUFY3 and RUFY4, but not with RUFY1, nor RUFY2. Post-translationally, ubiquitinated at Lys-141 by RNF167, leading to its degradation.

The protein localises to the late endosome membrane. It localises to the lysosome membrane. It is found in the cytoplasm. The protein resides in the cytoskeleton. Its subcellular location is the spindle. The protein localises to the cell projection. It localises to the axon. It is found in the synapse. The protein resides in the cytolytic granule membrane. Its subcellular location is the early endosome membrane. It carries out the reaction GTP + H2O = GDP + phosphate + H(+). Small GTPase which cycles between active GTP-bound and inactive GDP-bound states. In its active state, binds to a variety of effector proteins playing a key role in the regulation of lysosomal positioning which is important for nutrient sensing, natural killer cell-mediated cytotoxicity and antigen presentation. Along with its effectors, orchestrates lysosomal transport and fusion. Localizes specifically to lysosomal membranes and mediates anterograde lysosomal motility by recruiting PLEKHM2, which in turn recruits the motor protein kinesin-1 on lysosomes. Required for lysosomal and cytolytic granule exocytosis. Critical factor involved in NK cell-mediated cytotoxicity. Drives the polarization of cytolytic granules and microtubule-organizing centers (MTOCs) toward the immune synapse between effector NK lymphocytes and target cells. In neurons, mediates the anterograde axonal long-range transport of presynaptic lysosome-related vesicles required for presynaptic biogenesis and synaptic function. Also acts as a regulator of endosome to lysosome trafficking pathways of special significance for host defense. Recruits RUFY1 onto early endosomes regulating endosomes to trans-Golgi network proteins retrieval. Regulates cargo trafficking to lysosomes by binding to PLEKHM1 and recruiting the HOPS subunit VPS41, resulting in functional assembly of the HOPS complex on lysosomal membranes. Plays an important role in cargo delivery to lysosomes for antigen presentation and microbial killing. Directs the intersection of CD1d with lipid antigens in lysosomes, and plays a role in intersecting phagosomes with lysosomes to generate phagolysosomes that kill microbes. Involved in the process of MHC II presentation. Regulates the delivery of antigens to lysosomes and the formation of MHC II-peptide complexes through the recruitment of the HOPS complex to lysosomes allowing the fusion of late endosomes to lysosomes. May play a role in chromosome segregation. The polypeptide is ADP-ribosylation factor-like protein 8B (ARL8B) (Pongo abelii (Sumatran orangutan)).